The chain runs to 690 residues: Elongation factor G (690 aa).

The tr-type G domain maps to 8–283; sequence DKYRNIGIMA…AVVDFLPSPL (276 aa). GTP is bound by residues 17–24, 81–85, and 135–138; these read AHIDAGKT, DTPGH, and NKLD.

Belongs to the TRAFAC class translation factor GTPase superfamily. Classic translation factor GTPase family. EF-G/EF-2 subfamily.

The protein resides in the cytoplasm. Its function is as follows. Catalyzes the GTP-dependent ribosomal translocation step during translation elongation. During this step, the ribosome changes from the pre-translocational (PRE) to the post-translocational (POST) state as the newly formed A-site-bound peptidyl-tRNA and P-site-bound deacylated tRNA move to the P and E sites, respectively. Catalyzes the coordinated movement of the two tRNA molecules, the mRNA and conformational changes in the ribosome. This is Elongation factor G from Zymomonas mobilis subsp. mobilis (strain ATCC 31821 / ZM4 / CP4).